The sequence spans 358 residues: Probable branched-chain-amino-acid aminotransferase (358 aa).

Lys196 carries the N6-(pyridoxal phosphate)lysine modification.

Belongs to the class-IV pyridoxal-phosphate-dependent aminotransferase family. The cofactor is pyridoxal 5'-phosphate.

It carries out the reaction L-leucine + 2-oxoglutarate = 4-methyl-2-oxopentanoate + L-glutamate. It catalyses the reaction L-isoleucine + 2-oxoglutarate = (S)-3-methyl-2-oxopentanoate + L-glutamate. The catalysed reaction is L-valine + 2-oxoglutarate = 3-methyl-2-oxobutanoate + L-glutamate. It participates in amino-acid biosynthesis; L-isoleucine biosynthesis; L-isoleucine from 2-oxobutanoate: step 4/4. Its pathway is amino-acid biosynthesis; L-leucine biosynthesis; L-leucine from 3-methyl-2-oxobutanoate: step 4/4. It functions in the pathway amino-acid biosynthesis; L-valine biosynthesis; L-valine from pyruvate: step 4/4. Functionally, acts on leucine, isoleucine and valine. The polypeptide is Probable branched-chain-amino-acid aminotransferase (ilvE) (Staphylococcus epidermidis (strain ATCC 35984 / DSM 28319 / BCRC 17069 / CCUG 31568 / BM 3577 / RP62A)).